A 217-amino-acid polypeptide reads, in one-letter code: Small ribosomal subunit protein uS3c (217 aa).

Residues Val-47–Ala-119 enclose the KH type-2 domain.

The protein belongs to the universal ribosomal protein uS3 family. As to quaternary structure, part of the 30S ribosomal subunit.

It localises to the plastid. It is found in the chloroplast. The sequence is that of Small ribosomal subunit protein uS3c (rps3) from Pinus koraiensis (Korean pine).